Reading from the N-terminus, the 2193-residue chain is ATP-dependent helicase BRM (2193 aa).

Met-1 bears the N-acetylmethionine mark. Gly residues predominate over residues 1 to 10; it reads MQSGGSGGGP. Disordered stretches follow at residues 1 to 126, 175 to 231, 293 to 466, 511 to 558, and 580 to 649; these read MQSG…QEGQ, MQDL…PGNM, QKAG…GFTK, SPAI…DNVG, and TSTD…ASAR. Low complexity predominate over residues 23–62; sequence ASTSSAASPSSSSSSVQQQQQQQQQQQQQQQLASRQQQQQ. Residues 38-58 are a coiled coil; that stretch reads VQQQQQQQQQQQQQQQLASRQ. The segment covering 79–88 has biased composition (gly residues); the sequence is GVQGMMGGGN. Composition is skewed to low complexity over residues 91-102, 110-126, and 180-192; these read SSPGSMQMPQQS, QQQQQQQQQGSSTQEGQ, and PSSQPQASSSKPS. The span at 204-223 shows a compositional bias: polar residues; the sequence is ESSSQQRNETKSHPQQQVGT. Residues 301–320 show a composition bias toward low complexity; the sequence is ASQSPSIPISSQPASSSVVP. 4 stretches are compositionally biased toward polar residues: residues 325–339, 347–358, 383–412, and 421–433; these read PHANSASDISGQSGS, STGSFASTSSPR, QPTNGMPSGNPLQTSANETPVLDQNASTKK, and QMQQPRQLNTPTP. Positions 445–463 are enriched in low complexity; the sequence is SNSSLQSGQGTQQAQQRSG. The 37-residue stretch at 463 to 499 folds into the QLQ domain; the sequence is GFTKQQLHVLKAQILAFRRLKKGEGSLPPELLQAISP. Composition is skewed to basic and acidic residues over residues 517–537 and 611–621; these read VQDRSSDKTGEDQARSLECGK and PRSDSTADKGK. Polar residues predominate over residues 626-638; the sequence is DGSQSKVPPQANS. The Nuclear localization signal 1 motif lies at 705–712; that stretch reads LKKINGLL. Positions 726-795 form a coiled coil; the sequence is VLRLQIEEKK…QKAVREKQLK (70 aa). The Helicase ATP-binding domain maps to 993–1158; the sequence is LSLYNNKLNG…WSLLNLLLPD (166 aa). 1006 to 1013 contributes to the ATP binding site; that stretch reads DEMGLGKT. Residues 1109-1129 adopt a coiled-coil conformation; the sequence is DEAQRMKDRESVLARDLDRYR. Residues 1312-1489 form the Helicase C-terminal domain; it reads ILDRILIKLQ…QYKIDMADEV (178 aa). 2 disordered regions span residues 1583 to 1775 and 1789 to 1894; these read SKKP…DEEQ and LRPR…NAGA. Positions 1608–1617 are enriched in basic residues; the sequence is KRGRPKSKKI. A coiled-coil region spans residues 1618–1638; the sequence is NYKEIEDDIAGYSEESSEERN. Position 1641 is a phosphoserine (Ser-1641). Over residues 1642–1657 the composition is skewed to acidic residues; that stretch reads GNEEEGDIRQFDDDEL. The segment covering 1821-1832 has biased composition (basic and acidic residues); sequence TVVDSHSSRQDQ. Residues 1833–1842 show a composition bias toward low complexity; sequence SDSSSRLRSV. Composition is skewed to polar residues over residues 1848 to 1870 and 1882 to 1892; these read ASTSKLHVSSPKSGRLNATQLTV and DGTSPISSSNA. Residues 1895 to 2005 form the Bromo domain; it reads RMSHIIQKRC…NLFFDLLKMS (111 aa). Positions 1901-1908 match the Nuclear localization signal 2 motif; sequence QKRCKIVI. A compositionally biased stretch (polar residues) spans 2022 to 2032; it reads GSAPTLVSTPT. Residues 2022–2193 are disordered; that stretch reads GSAPTLVSTP…DSGKRRPSHL (172 aa). Phosphoserine is present on Ser-2137. Residues 2149–2166 show a composition bias toward polar residues; that stretch reads LAQQQRWPNQPTHPNNSG.

The protein belongs to the SNF2/RAD54 helicase family. Interacts with SWI3B, SWI3C, H3 and H4, but not with SWI3A, SWI3D or BSH. Interacts with LFY. Interacts with REF6. Binds to FGT1. Highly expressed in inflorescences and leaves. Low expression in siliques, roots and seedlings. Detected in shoot apical meristem, root meristem, vascular tissue of developing leaves, petals, stamens filaments, anthers and carpels.

It localises to the nucleus. The enzyme catalyses ATP + H2O = ADP + phosphate + H(+). Functionally, ATPase subunit of a multiprotein complex equivalent of the SWI/SNF complex that acts by remodeling the chromatin by catalyzing an ATP-dependent alteration in the structure of nucleosomal DNA. Represses embryonic genes in leaves and controls shoot development and flowering. Activates flower homeotic genes. The association of BRM with its target genes requires REF6. Necessary to acquire heat stress (HS) memory, by globally binding to HS memory genes. This is ATP-dependent helicase BRM from Arabidopsis thaliana (Mouse-ear cress).